Here is a 463-residue protein sequence, read N- to C-terminus: L-seryl-tRNA(Sec) selenium transferase (463 aa).

An N6-(pyridoxal phosphate)lysine modification is found at K295.

The protein belongs to the SelA family. In terms of assembly, homodecamer; pentamer of dimers. Binds only one seryl-tRNA(Sec) per dimer. It depends on pyridoxal 5'-phosphate as a cofactor.

The protein resides in the cytoplasm. The catalysed reaction is L-seryl-tRNA(Sec) + selenophosphate + H(+) = L-selenocysteinyl-tRNA(Sec) + phosphate. Its pathway is aminoacyl-tRNA biosynthesis; selenocysteinyl-tRNA(Sec) biosynthesis; selenocysteinyl-tRNA(Sec) from L-seryl-tRNA(Sec) (bacterial route): step 1/1. Converts seryl-tRNA(Sec) to selenocysteinyl-tRNA(Sec) required for selenoprotein biosynthesis. The polypeptide is L-seryl-tRNA(Sec) selenium transferase (Salmonella paratyphi A (strain AKU_12601)).